A 280-amino-acid chain; its full sequence is MEPILHIQGDAHSSLTPLIFIHAVSGLAWPYMALGNLSNTSDPARSRPVYGISSPVYSSELQPHGPYLLGGWSMGGMIAVKMAEILQAKKETVQQVILLDSINPEKYPAFVNEEEHRIIADGLFTNVCQAMGMADLADDSDDEDNRSDASDASDDGSTMSDEEEEDDNLHRLFSTMRRHIHASTLSISSTEPGKLLPPNSVCHTSVTLVKCTQLSETVPALFSARQRCIRRCALHPTLQWRPQNFDRFRTLLIDARHDSLFDEEHVEEVTSMLRQILESC.

Over residues 136–145 (LADDSDDEDN) the composition is skewed to acidic residues. The tract at residues 136 to 167 (LADDSDDEDNRSDASDASDDGSTMSDEEEEDD) is disordered.

This sequence belongs to the AMT4 thioesterase family.

It participates in secondary metabolite biosynthesis. Thioesterase; part of the gene cluster that mediates the biosynthesis of pyranonigrins, a family of antioxidative compounds. The first step of pyranonigrins biosynthesis is performed by the hybrid PKS-NRPS synthetase that condenses 6 malonyl-CoA units to an acetyl starter unit, to form a 1,3,5-trioxotetradecane-6,8-dienyl-ACP. The enoyl reductase (ER) domain of pynA is likely to be functional during the first two rounds of polyketide chain extension, to generate the saturated C-C bonds of the alkyl side chain. PynA subsequently forms the amide bond between the acyl chain and L-serine. Although pynA has a terminal reductase domain, it appears to require the thioesterase pynI for the release of the straight-chain intermediate from pynA via the formation of a tetramic acid pyranonigrin J. The methyltransferase pynC then coverts pyranonigrin J to pyranonigrin I via N-methylation. The FAD-dependent monooxygenase pynG catalyzes an epoxidation-mediated cyclization to form the dihydro-gamma-pyrone moiety, followed by pynD-catalyzed oxidation of the alcohol to the ketone and enolization to yield the characteristic tetramic acid-fused gamma-pyrone core of pyranonigrin H. Pyranonigrin H is substrate of pynH for dehydration-mediated exo-methylene formation from the serine side chain to produce pyranonigrin E, before the oxidase pynE reduces the exo-methylene of pyranonigrin E into a pendant methyl to form pyranonigrin G. The FAD-linked oxidoreductase pynB performs the reverse reaction and converts pyranonigrin G back to pyranonigrin E. The chain is Thioesterase pynI from Aspergillus niger (strain ATCC MYA-4892 / CBS 513.88 / FGSC A1513).